A 287-amino-acid chain; its full sequence is Ribosomal RNA small subunit methyltransferase A (287 aa).

S-adenosyl-L-methionine is bound by residues asparagine 28, leucine 30, glycine 55, glutamate 76, aspartate 101, and asparagine 125.

Belongs to the class I-like SAM-binding methyltransferase superfamily. rRNA adenine N(6)-methyltransferase family. RsmA subfamily.

It is found in the cytoplasm. It carries out the reaction adenosine(1518)/adenosine(1519) in 16S rRNA + 4 S-adenosyl-L-methionine = N(6)-dimethyladenosine(1518)/N(6)-dimethyladenosine(1519) in 16S rRNA + 4 S-adenosyl-L-homocysteine + 4 H(+). In terms of biological role, specifically dimethylates two adjacent adenosines (A1518 and A1519) in the loop of a conserved hairpin near the 3'-end of 16S rRNA in the 30S particle. May play a critical role in biogenesis of 30S subunits. The chain is Ribosomal RNA small subunit methyltransferase A from Alkaliphilus metalliredigens (strain QYMF).